The sequence spans 360 residues: Putative FBD-associated F-box protein At5g56430 (360 aa).

The 53-residue stretch at 1 to 53 (MRNISDLPNDLLVKILSLIPIKVAASTSLLSKRWGSVWKLIPTLDYDGTYSAA) folds into the F-box domain. Kelch repeat units lie at residues 140-186 (IRYT…EQLD) and 235-285 (VMCS…SVPE). An FBD domain is found at 276–326 (KWEQPNSVPECLLVSLETVKWILYKGTQEEKDVVKYLLKNGNFIKTMSIRF).

In Arabidopsis thaliana (Mouse-ear cress), this protein is Putative FBD-associated F-box protein At5g56430.